We begin with the raw amino-acid sequence, 81 residues long: Sulfur carrier protein TusA (81 aa).

C19 functions as the Cysteine persulfide intermediate in the catalytic mechanism.

It belongs to the sulfur carrier protein TusA family. As to quaternary structure, interacts with IscS.

The protein localises to the cytoplasm. It functions in the pathway tRNA modification. In terms of biological role, sulfur carrier protein involved in sulfur trafficking in the cell. Part of a sulfur-relay system required for 2-thiolation during synthesis of 2-thiouridine of the modified wobble base 5-methylaminomethyl-2-thiouridine (mnm(5)s(2)U) in tRNA. Interacts with IscS and stimulates its cysteine desulfurase activity. Accepts an activated sulfur from IscS, which is then transferred to TusD, and thus determines the direction of sulfur flow from IscS to 2-thiouridine formation. Also appears to be involved in sulfur transfer for the biosynthesis of molybdopterin. The protein is Sulfur carrier protein TusA of Salmonella choleraesuis (strain SC-B67).